Reading from the N-terminus, the 493-residue chain is Isoniazid-induced protein IniC (493 aa).

This is Isoniazid-induced protein IniC (iniC) from Mycobacterium tuberculosis (strain CDC 1551 / Oshkosh).